Here is a 147-residue protein sequence, read N- to C-terminus: MEQTYVMVKPDGVERGLIGEIVTRIEKKGLKIVAGKLMQIDRELAEKHYAEHIGKSFFEDLIGFITSGPVFAMVLEGDDAIATARRMMGKTNPLEADPGTIRADYAIHTNRNVIHGSDSPESAKREIQLFFAPQEILSYQKAIDTWI.

Residues lysine 9, phenylalanine 57, arginine 85, threonine 91, arginine 102, and asparagine 112 each coordinate ATP. Histidine 115 (pros-phosphohistidine intermediate) is an active-site residue.

It belongs to the NDK family. As to quaternary structure, homotetramer. The cofactor is Mg(2+).

The protein localises to the cytoplasm. It carries out the reaction a 2'-deoxyribonucleoside 5'-diphosphate + ATP = a 2'-deoxyribonucleoside 5'-triphosphate + ADP. The catalysed reaction is a ribonucleoside 5'-diphosphate + ATP = a ribonucleoside 5'-triphosphate + ADP. In terms of biological role, major role in the synthesis of nucleoside triphosphates other than ATP. The ATP gamma phosphate is transferred to the NDP beta phosphate via a ping-pong mechanism, using a phosphorylated active-site intermediate. The chain is Nucleoside diphosphate kinase from Listeria monocytogenes serotype 4b (strain F2365).